We begin with the raw amino-acid sequence, 1077 residues long: MLLWKAAATKLRGVKGMRGFRDKIKGTKTKLLRRDSKDSTEEASAVRPSKTAKGGPGTGTETGSGGSGEGSWGRKSKRHSLIGRDPSRSDQSLVAPSDRTFDTTTDLDTTSISGNGNANPTASANGDIVIEGGTAPKRRSAGKEFDNLEDGTGLQPQLLNTTAKPLELSPAPPLTDTTGSIESPSTAAPDKGSFNCELPVVLSQKDSLKLNKNGILVGVESRPPSQIPLAENENLQPQPQPQPPQSNAAATAASAASVSALIQPSEGTPSKASTTGQSSTLSLPSDKTVILESTTPAVPSTSTPSTNIAATTTTAAITTTSVPAPTTTISRTPSRKLSDRSSDLSINTTNLPPPFTRPYRLSQFPTDSSGLRADTDSSALSQLQRSSSRASLGIHEPIAPETVEPPFRDKRESSFSHGPETLVYTGPLLHNPPEPASVVPVAAEVAQTLHTVSETGTFQPTELARNESVVSRNESVKSRILSSSGSRRKHPLSFSRRQSLIHPSDTGLLRYLLEQESASPTTYGREGGSNIQSVAGLMPHSENQLRTRKVWVKRPGGSPTQVIVTEDDFVDTVRDLCLRKYTNALGRHYDSPDLMIRISPPLKPQSARARQMGNMQTHTDRLLNPDEVLCQLLDDYYPNGQTSEDALIVEVPQQQRSRTPRPSPGPHSMSYAYGQTVHDLQLPGEDYFTPVGTIVPSIPHSQSGTVRSTHNLPANPSSLSNYIANSPPPSSPGHRSLKRPGPVRMTTGSPVGSTTSSAPGGGGGGVMLIPRAGGVVPDRIRATNVEAPTSPSVPPQMVALPSSPGIIKPIPQKPASPGVLPAVTSPPAITRPPPKSKEITASIGTLDGQVPSINVLIVEDNIINLRLLEAFMKRLKVRWATAMNGREAVTKWRTGGFQLVLMDIQLPIMNGLDATKEIRRLERLNGIGSFSSSPSGPEDELSSADKLDKSLVFKGSVIIVALTASSLRSDRDEALAVGCNDFLTKPVNFTFLERKVMEWGCMQALIDFEGWRKWKDLASKPGASGGKTSKGGRGKASASTSAAAKKGKESSISVLDNASSSSSTPQPTQSVPIAGQS.

One can recognise a Response regulatory domain in the interval 854–1000; the sequence is NVLIVEDNII…FLERKVMEWG (147 aa). Aspartate 903 carries the post-translational modification 4-aspartylphosphate.

The protein belongs to the SSK1 family.

It is found in the cytoplasm. Functionally, two-domain response regulator protein in the two-component signal transduction system of the HOG1 pathway. Involved in multi-stress responses and is essential for conidiation, secondary metabolism, autophagy and endocyrosis. In addition, regulates mycelial growth, cell nucleus development, septum formation, and organelle development. Also regulates trap formation and thus plays a crucial role in pathogenicity. The chain is Response regulator SSK1 from Arthrobotrys oligospora (strain ATCC 24927 / CBS 115.81 / DSM 1491) (Nematode-trapping fungus).